Here is a 447-residue protein sequence, read N- to C-terminus: Trigger factor (447 aa).

The PPIase FKBP-type domain maps to 188 to 273 (GDKLVIDFEG…VNDIQVAEDF (86 aa)).

Belongs to the FKBP-type PPIase family. Tig subfamily.

It is found in the cytoplasm. It catalyses the reaction [protein]-peptidylproline (omega=180) = [protein]-peptidylproline (omega=0). Functionally, involved in protein export. Acts as a chaperone by maintaining the newly synthesized protein in an open conformation. Functions as a peptidyl-prolyl cis-trans isomerase. The polypeptide is Trigger factor (Wolbachia sp. subsp. Brugia malayi (strain TRS)).